A 986-amino-acid chain; its full sequence is Bifunctional glutamine synthetase adenylyltransferase/adenylyl-removing enzyme (986 aa).

The segment at 1–473 is adenylyl removase; it reads MTSSAPGNAD…HYARLFEGDP (473 aa). Positions 478-986 are adenylyl transferase; it reads SLPPVNYGAG…RRVFTALLER (509 aa).

This sequence belongs to the GlnE family. Requires Mg(2+) as cofactor.

It carries out the reaction [glutamine synthetase]-O(4)-(5'-adenylyl)-L-tyrosine + phosphate = [glutamine synthetase]-L-tyrosine + ADP. The enzyme catalyses [glutamine synthetase]-L-tyrosine + ATP = [glutamine synthetase]-O(4)-(5'-adenylyl)-L-tyrosine + diphosphate. Its function is as follows. Involved in the regulation of glutamine synthetase GlnA, a key enzyme in the process to assimilate ammonia. When cellular nitrogen levels are high, the C-terminal adenylyl transferase (AT) inactivates GlnA by covalent transfer of an adenylyl group from ATP to specific tyrosine residue of GlnA, thus reducing its activity. Conversely, when nitrogen levels are low, the N-terminal adenylyl removase (AR) activates GlnA by removing the adenylyl group by phosphorolysis, increasing its activity. The regulatory region of GlnE binds the signal transduction protein PII (GlnB) which indicates the nitrogen status of the cell. This Bradyrhizobium sp. (strain ORS 278) protein is Bifunctional glutamine synthetase adenylyltransferase/adenylyl-removing enzyme.